Reading from the N-terminus, the 817-residue chain is E3 ubiquitin-protein ligase TRIM9 (817 aa).

The segment at 10–50 adopts an RING-type zinc-finger fold; the sequence is CPVCGSFYREPIILPCSHNLCQACARNILVQTPESESPQSR. Phosphothreonine is present on T41. Phosphoserine occurs at positions 44, 46, 49, and 53. 2 consecutive B box-type zinc fingers follow at residues 163–212 and 224–266; these read AAAL…LVPP and RKVS…VKAL. Zn(2+)-binding residues include C168, C171, C193, H198, C229, H232, C252, and H258. Residues 273–340 adopt a coiled-coil conformation; it reads HKSQLSQALN…KAQLLARVNK (68 aa). One can recognise a COS domain in the interval 374 to 432; sequence IKENDPSGFLQISDALIRRVHLTEDQWGKGTLTPRMTTDFDLSLDNSPLLQSIHQLDFV. Residues 440–535 enclose the Fibronectin type-III domain; that stretch reads VPATPILQLE…KTLVLQTSEA (96 aa). Positions 535–557 are disordered; the sequence is AAGAHETKPMKDTDSEEQTLPFP. Positions 537–547 are enriched in basic and acidic residues; sequence GAHETKPMKDT. The 182-residue stretch at 613 to 794 folds into the B30.2/SPRY domain; that stretch reads ETQSASYSQL…VQVSLWAPGL (182 aa).

It belongs to the TRIM/RBCC family. As to quaternary structure, interacts with SNAP25. In terms of processing, auto-ubiquitinated. Brain. Expression is higher in the cerebral cortex and hippocampus (at protein level). Its expression is mainly confined to the central nervous system. The developing neocortex, the dorsal thalamus, the midbrain, the basal area of the hindbrain and spinal cord show high level of expression during embryogenesis. In adult brain, it is detected in the Purkinje cells of the cerebellum, in the hippocampus, and in the cortex.

It localises to the cytoplasm. The protein resides in the cell projection. The protein localises to the dendrite. Its subcellular location is the cytoplasmic vesicle. It is found in the secretory vesicle. It localises to the synaptic vesicle. The protein resides in the synapse. The protein localises to the cytoskeleton. It carries out the reaction S-ubiquitinyl-[E2 ubiquitin-conjugating enzyme]-L-cysteine + [acceptor protein]-L-lysine = [E2 ubiquitin-conjugating enzyme]-L-cysteine + N(6)-ubiquitinyl-[acceptor protein]-L-lysine.. It functions in the pathway protein modification; protein ubiquitination. In terms of biological role, E3 ubiquitin-protein ligase which ubiquitinates itself in cooperation with an E2 enzyme UBE2D2/UBC4 and serves as a targeting signal for proteasomal degradation. May play a role in regulation of neuronal functions. May act as a regulator of synaptic vesicle exocytosis by controlling the availability of SNAP25 for the SNARE complex formation. This chain is E3 ubiquitin-protein ligase TRIM9 (Trim9), found in Mus musculus (Mouse).